The chain runs to 151 residues: Flagellar assembly factor FliW 2 (151 aa).

The protein belongs to the FliW family. As to quaternary structure, interacts with translational regulator CsrA and flagellin(s).

The protein localises to the cytoplasm. Its function is as follows. Acts as an anti-CsrA protein, binds CsrA and prevents it from repressing translation of its target genes, one of which is flagellin. Binds to flagellin and participates in the assembly of the flagellum. In Desulfotalea psychrophila (strain LSv54 / DSM 12343), this protein is Flagellar assembly factor FliW 2.